Here is a 331-residue protein sequence, read N- to C-terminus: Tryptophan--tRNA ligase (331 aa).

ATP contacts are provided by residues 10–12 and 18–19; these read QPS and GN. A 'HIGH' region motif is present at residues 11 to 19; it reads PSGQLTLGN. Asp133 lines the L-tryptophan pocket. ATP contacts are provided by residues 145–147, Val184, and 193–197; these read GED and KMSKS. A 'KMSKS' region motif is present at residues 193–197; sequence KMSKS.

The protein belongs to the class-I aminoacyl-tRNA synthetase family. In terms of assembly, homodimer.

It localises to the cytoplasm. It carries out the reaction tRNA(Trp) + L-tryptophan + ATP = L-tryptophyl-tRNA(Trp) + AMP + diphosphate + H(+). In terms of biological role, catalyzes the attachment of tryptophan to tRNA(Trp). The sequence is that of Tryptophan--tRNA ligase from Listeria monocytogenes serovar 1/2a (strain ATCC BAA-679 / EGD-e).